A 1075-amino-acid polypeptide reads, in one-letter code: DNA-directed RNA polymerase subunit beta (1075 aa).

The protein belongs to the RNA polymerase beta chain family. In terms of assembly, in plastids the minimal PEP RNA polymerase catalytic core is composed of four subunits: alpha, beta, beta', and beta''. When a (nuclear-encoded) sigma factor is associated with the core the holoenzyme is formed, which can initiate transcription.

It is found in the plastid. The protein resides in the chloroplast. The enzyme catalyses RNA(n) + a ribonucleoside 5'-triphosphate = RNA(n+1) + diphosphate. Functionally, DNA-dependent RNA polymerase catalyzes the transcription of DNA into RNA using the four ribonucleoside triphosphates as substrates. This is DNA-directed RNA polymerase subunit beta from Pinus thunbergii (Japanese black pine).